We begin with the raw amino-acid sequence, 176 residues long: Cytochrome c oxidase subunit 5b-1, mitochondrial (176 aa).

A mitochondrion-targeting transit peptide spans 1–55 (MWRRIVSSQLKTLAADVVAASPRRSIAATTRPVGFYLAANRSAISASSFVIPRRF). Zn(2+) contacts are provided by Cys-122, Cys-146, and Cys-149. The tract at residues 157 to 176 (VVGPGGPPDGHGDEDDEHHH) is disordered.

The protein belongs to the cytochrome c oxidase subunit 5B (TC 3.D.4.11) family.

It localises to the mitochondrion inner membrane. In terms of biological role, this protein is one of the nuclear-coded polypeptide chains of cytochrome c oxidase, the terminal oxidase in mitochondrial electron transport. The sequence is that of Cytochrome c oxidase subunit 5b-1, mitochondrial (COX5B-1) from Arabidopsis thaliana (Mouse-ear cress).